The sequence spans 909 residues: UPF0182 protein H16_A1615 (909 aa).

7 helical membrane-spanning segments follow: residues 16-36 (TWVVAVIVALIAVSRVTGLVV), 58-78 (ALLFLAVFAVSAGALWLSGWL), 114-134 (VAVLVGLLMAVGELSSWAIAL), 169-189 (WLLLLLGCSAVLAGVVYGLRG), 205-225 (ATHGSALLGLFFALQAWSYWL), 246-266 (VHVGLPVLWLQVGLAAAAAAA), and 281-301 (AAALLVVGSAIVLGTIWPALF).

Belongs to the UPF0182 family.

The protein resides in the cell membrane. This Cupriavidus necator (strain ATCC 17699 / DSM 428 / KCTC 22496 / NCIMB 10442 / H16 / Stanier 337) (Ralstonia eutropha) protein is UPF0182 protein H16_A1615.